The primary structure comprises 257 residues: Pyridoxine/pyridoxamine 5'-phosphate oxidase (257 aa).

Substrate is bound at residue 33 to 36 (RIKY). Residue 90–93 (RFVL) coordinates FMN. K95 provides a ligand contact to pyridoxal 5'-phosphate. FMN-binding positions include 105–106 (YT) and K112. Positions 152, 156, and 160 each coordinate pyridoxal 5'-phosphate. FMN is bound by residues 169–170 (QS) and W216. 222–224 (RLH) provides a ligand contact to substrate. Residue R226 participates in FMN binding.

It belongs to the pyridoxamine 5'-phosphate oxidase family. As to quaternary structure, homodimer. It depends on FMN as a cofactor. As to expression, expressed in silk gland and fat body of the larva.

The catalysed reaction is pyridoxamine 5'-phosphate + O2 + H2O = pyridoxal 5'-phosphate + H2O2 + NH4(+). It catalyses the reaction pyridoxine 5'-phosphate + O2 = pyridoxal 5'-phosphate + H2O2. It participates in cofactor metabolism; pyridoxal 5'-phosphate salvage; pyridoxal 5'-phosphate from pyridoxamine 5'-phosphate: step 1/1. Its pathway is cofactor metabolism; pyridoxal 5'-phosphate salvage; pyridoxal 5'-phosphate from pyridoxine 5'-phosphate: step 1/1. Functionally, catalyzes the oxidation of either pyridoxine 5'-phosphate (PNP) or pyridoxamine 5'-phosphate (PMP) into pyridoxal 5'-phosphate (PLP). This is Pyridoxine/pyridoxamine 5'-phosphate oxidase from Bombyx mori (Silk moth).